The chain runs to 581 residues: Arginine--tRNA ligase (581 aa).

Positions 126–136 match the 'HIGH' region motif; sequence PNLAKEMHVGH.

The protein belongs to the class-I aminoacyl-tRNA synthetase family. As to quaternary structure, monomer.

It localises to the cytoplasm. The enzyme catalyses tRNA(Arg) + L-arginine + ATP = L-arginyl-tRNA(Arg) + AMP + diphosphate. In Shewanella baltica (strain OS223), this protein is Arginine--tRNA ligase.